The sequence spans 177 residues: Ribosome maturation factor RimM (177 aa).

Residues 101 to 174 (EGEFHLLDLV…WLLLTPPPGL (74 aa)) form the PRC barrel domain.

It belongs to the RimM family. As to quaternary structure, binds ribosomal protein uS19.

The protein localises to the cytoplasm. In terms of biological role, an accessory protein needed during the final step in the assembly of 30S ribosomal subunit, possibly for assembly of the head region. Essential for efficient processing of 16S rRNA. May be needed both before and after RbfA during the maturation of 16S rRNA. It has affinity for free ribosomal 30S subunits but not for 70S ribosomes. The polypeptide is Ribosome maturation factor RimM (Synechococcus sp. (strain CC9605)).